The primary structure comprises 124 residues: Small ribosomal subunit protein eS6 (124 aa).

This sequence belongs to the eukaryotic ribosomal protein eS6 family.

This Thermoplasma acidophilum (strain ATCC 25905 / DSM 1728 / JCM 9062 / NBRC 15155 / AMRC-C165) protein is Small ribosomal subunit protein eS6.